The primary structure comprises 407 residues: Probable endo-beta-1,4-glucanase celB (407 aa).

The N-terminal stretch at 1–18 (MALTLAATALVLLPLVTA) is a signal peptide. N-linked (GlcNAc...) asparagine glycosylation is present at Asn136. Glu216 acts as the Nucleophile in catalysis. Residue Glu221 is the Proton donor of the active site.

The protein belongs to the glycosyl hydrolase 7 (cellulase C) family.

The protein resides in the secreted. It catalyses the reaction Endohydrolysis of (1-&gt;4)-beta-D-glucosidic linkages in cellulose, lichenin and cereal beta-D-glucans.. Has endoglucanase activity on substrates containing beta-1,4 glycosidic bonds, like in carboxymethylcellulose (CMC), hydroxyethylcellulose (HEC) and beta-glucan. Involved in the degradation of complex natural cellulosic substrates. In Neosartorya fischeri (strain ATCC 1020 / DSM 3700 / CBS 544.65 / FGSC A1164 / JCM 1740 / NRRL 181 / WB 181) (Aspergillus fischerianus), this protein is Probable endo-beta-1,4-glucanase celB (celB).